A 505-amino-acid polypeptide reads, in one-letter code: Aspartyl/glutamyl-tRNA(Asn/Gln) amidotransferase subunit B (505 aa).

Residues 220 to 241 form a disordered region; the sequence is NVSLRPRPAPGDPDAPFGTRSE.

The protein belongs to the GatB/GatE family. GatB subfamily. Heterotrimer of A, B and C subunits.

The catalysed reaction is L-glutamyl-tRNA(Gln) + L-glutamine + ATP + H2O = L-glutaminyl-tRNA(Gln) + L-glutamate + ADP + phosphate + H(+). It carries out the reaction L-aspartyl-tRNA(Asn) + L-glutamine + ATP + H2O = L-asparaginyl-tRNA(Asn) + L-glutamate + ADP + phosphate + 2 H(+). Functionally, allows the formation of correctly charged Asn-tRNA(Asn) or Gln-tRNA(Gln) through the transamidation of misacylated Asp-tRNA(Asn) or Glu-tRNA(Gln) in organisms which lack either or both of asparaginyl-tRNA or glutaminyl-tRNA synthetases. The reaction takes place in the presence of glutamine and ATP through an activated phospho-Asp-tRNA(Asn) or phospho-Glu-tRNA(Gln). This Frankia casuarinae (strain DSM 45818 / CECT 9043 / HFP020203 / CcI3) protein is Aspartyl/glutamyl-tRNA(Asn/Gln) amidotransferase subunit B.